The following is a 300-amino-acid chain: Probable protein phosphatase 2C 2 (300 aa).

The PPM-type phosphatase domain occupies 23–298 (IFAASEMQGW…DNMTTILVYL (276 aa)). 4 residues coordinate Mn(2+): D57, G58, D237, and D289.

The protein belongs to the PP2C family. Mg(2+) serves as cofactor. Mn(2+) is required as a cofactor.

It localises to the membrane. It carries out the reaction O-phospho-L-seryl-[protein] + H2O = L-seryl-[protein] + phosphate. It catalyses the reaction O-phospho-L-threonyl-[protein] + H2O = L-threonyl-[protein] + phosphate. In terms of biological role, enzyme with a broad specificity. This chain is Probable protein phosphatase 2C 2, found in Paramecium tetraurelia.